A 527-amino-acid chain; its full sequence is Peptide chain release factor 3 (527 aa).

The tr-type G domain occupies 11–278 (AKRRTFAIIS…GFVEWAPPPL (268 aa)). GTP contacts are provided by residues 20–27 (SHPDAGKT), 87–91 (DTPGH), and 141–144 (NKMD).

This sequence belongs to the TRAFAC class translation factor GTPase superfamily. Classic translation factor GTPase family. PrfC subfamily.

The protein resides in the cytoplasm. In terms of biological role, increases the formation of ribosomal termination complexes and stimulates activities of RF-1 and RF-2. It binds guanine nucleotides and has strong preference for UGA stop codons. It may interact directly with the ribosome. The stimulation of RF-1 and RF-2 is significantly reduced by GTP and GDP, but not by GMP. The sequence is that of Peptide chain release factor 3 from Saccharophagus degradans (strain 2-40 / ATCC 43961 / DSM 17024).